A 255-amino-acid chain; its full sequence is MLTKRIIACLDVKDGRVVKGTQFKNHKDMGDIIELARYYSQNGIDELVFYDIAASARKERISREWVSEVAKNINISFCVAGGIKSEEDAAELLANGADKISINSPALNDPSLITRLAKSFGVQCVVVGIDSFKDENGNLKVFQYTGDEKTSKHSGKSTLEWVKKVQDLGAGEIVLNMMNQDGVKNGYDLEQLEAVYKICKVPLIASGGAGKMEHFLEAFKLGIDGALAASVFHQKLIDIKELKIYLKNQGLSIRI.

Active-site residues include Asp-11 and Asp-130.

The protein belongs to the HisA/HisF family. Heterodimer of HisH and HisF.

Its subcellular location is the cytoplasm. The enzyme catalyses 5-[(5-phospho-1-deoxy-D-ribulos-1-ylimino)methylamino]-1-(5-phospho-beta-D-ribosyl)imidazole-4-carboxamide + L-glutamine = D-erythro-1-(imidazol-4-yl)glycerol 3-phosphate + 5-amino-1-(5-phospho-beta-D-ribosyl)imidazole-4-carboxamide + L-glutamate + H(+). It participates in amino-acid biosynthesis; L-histidine biosynthesis; L-histidine from 5-phospho-alpha-D-ribose 1-diphosphate: step 5/9. Its function is as follows. IGPS catalyzes the conversion of PRFAR and glutamine to IGP, AICAR and glutamate. The HisF subunit catalyzes the cyclization activity that produces IGP and AICAR from PRFAR using the ammonia provided by the HisH subunit. This Campylobacter jejuni (strain RM1221) protein is Imidazole glycerol phosphate synthase subunit HisF.